Consider the following 425-residue polypeptide: MSCYRVEGGFPVSGCIRVCGNKNAALPCIAAAVLTQEPVLLQNVPDIEDVAVMLTIFRAFGGSVERRGNHEYMLHLPQLQTCEVPCEAAQKVRASILFAGPLLARGRKAVLPPPGGDVIGRRRLDTHFLALAALGAQVRLDGVFTFSANKLVGCDVFLDEASVTATENVLMASVLAEGVTVITNAASEPHVQDLCHLLNAMGARVSGIGSNVLTIEGVSALHGTTYTLGADFMEVGSLIGLAVVTRGALTISDVNVRDLRPLGFAFKKLGVIWSEQEHAVSVSASQDLRVNYDFGGMIPKIDDGPWPAFPPDLTSIMTVVATQVEGVILIHEKMFESRMFFVDKLITMGARIILCDPHRALVSGPSALHGSDLVSPDVRAGMAMVLAACCARGVSIIRNVYQIERGYERLVERLQAIGVRIWKEG.

Residue 22 to 23 (KN) participates in phosphoenolpyruvate binding. Arginine 93 lines the UDP-N-acetyl-alpha-D-glucosamine pocket. The Proton donor role is filled by aspartate 117. Residues aspartate 312 and methionine 334 each contribute to the UDP-N-acetyl-alpha-D-glucosamine site.

The protein belongs to the EPSP synthase family. MurA subfamily.

The protein resides in the cytoplasm. The catalysed reaction is phosphoenolpyruvate + UDP-N-acetyl-alpha-D-glucosamine = UDP-N-acetyl-3-O-(1-carboxyvinyl)-alpha-D-glucosamine + phosphate. It functions in the pathway cell wall biogenesis; peptidoglycan biosynthesis. Functionally, cell wall formation. Adds enolpyruvyl to UDP-N-acetylglucosamine. The polypeptide is UDP-N-acetylglucosamine 1-carboxyvinyltransferase (Treponema pallidum (strain Nichols)).